Consider the following 434-residue polypeptide: ATP-dependent protease ATPase subunit HslU (434 aa).

ATP contacts are provided by residues Val-18, 60 to 65 (GVGKTE), Asp-247, Glu-312, and Arg-384.

This sequence belongs to the ClpX chaperone family. HslU subfamily. A double ring-shaped homohexamer of HslV is capped on each side by a ring-shaped HslU homohexamer. The assembly of the HslU/HslV complex is dependent on binding of ATP.

The protein localises to the cytoplasm. In terms of biological role, ATPase subunit of a proteasome-like degradation complex; this subunit has chaperone activity. The binding of ATP and its subsequent hydrolysis by HslU are essential for unfolding of protein substrates subsequently hydrolyzed by HslV. HslU recognizes the N-terminal part of its protein substrates and unfolds these before they are guided to HslV for hydrolysis. The polypeptide is ATP-dependent protease ATPase subunit HslU (Bradyrhizobium diazoefficiens (strain JCM 10833 / BCRC 13528 / IAM 13628 / NBRC 14792 / USDA 110)).